The sequence spans 355 residues: Double-stranded RNA-binding protein 4 (355 aa).

DRBM domains follow at residues 4-73 (VYKG…SLTP) and 82-150 (AYKN…SIKN). Over residues 149 to 188 (KNGNSNQTGSPTLPSERQEDVNSNVKSSPQEIHSQPSSKV) the composition is skewed to polar residues. The interval 149-193 (KNGNSNQTGSPTLPSERQEDVNSNVKSSPQEIHSQPSSKVVMTPD) is disordered.

Heterodimer with DRB1 or DRB5. Interacts with DCL4 and cauliflower mosaic virus (CaMV) transactivator/viroplasmin protein. Interaction with CaMV transactivator/viroplasmin protein inhibits RNA silencing ability of DRB4. Expressed in roots, leaf vasculature, shoot apical meristem (SAM) and developing anthers.

The protein resides in the nucleus. Functionally, double-stranded RNA-binding protein involved in RNA-mediated post-transcriptional gene silencing (PTGS). Functions in the trans-acting small interfering RNAs (ta-siRNAs) biogenesis by binding and assisting DICER-LIKE 4 (DCL4). Required for DCL4 activity. Required for the 21 nucleotide ta-siRNAs production of the TAS3 transcript in leaves but not in flowers. Plays an important role in silencing RNA of both DNA and RNA viruses. Involved with argonaute 7 (AGO7) and RDR6 in turnip crinkle virus (TCV) silencing. May not be directly involved in viral siRNA production. May stabilize the 21 nucleotide viral siRNAs and deliver them to the RISC complex. Targeted by the viral silencing suppressor (VSR) transactivator/viroplasmin (TAV) protein of the cauliflower mosaic virus (CaMV) that inactivates DRB4 function in RNA silencing. Probably not involved in the guide strand selection from RNA duplexes. Involved in leaf morphology through its function in ta-siRNA-mediated silencing. The sequence is that of Double-stranded RNA-binding protein 4 (DBR4) from Arabidopsis thaliana (Mouse-ear cress).